The following is a 488-amino-acid chain: 3-octaprenyl-4-hydroxybenzoate carboxy-lyase (488 aa).

Asn-172 contributes to the Mn(2+) binding site. Prenylated FMN-binding positions include Ile-175–Arg-177, Arg-189–Leu-191, and Arg-194–Gly-195. Glu-238 contacts Mn(2+). Residue Asp-287 is the Proton donor of the active site.

This sequence belongs to the UbiD family. In terms of assembly, homohexamer. Prenylated FMN serves as cofactor. Mn(2+) is required as a cofactor.

The protein localises to the cell membrane. It catalyses the reaction a 4-hydroxy-3-(all-trans-polyprenyl)benzoate + H(+) = a 2-(all-trans-polyprenyl)phenol + CO2. It functions in the pathway cofactor biosynthesis; ubiquinone biosynthesis. Catalyzes the decarboxylation of 3-octaprenyl-4-hydroxy benzoate to 2-octaprenylphenol, an intermediate step in ubiquinone biosynthesis. This Ectopseudomonas mendocina (strain ymp) (Pseudomonas mendocina) protein is 3-octaprenyl-4-hydroxybenzoate carboxy-lyase.